A 289-amino-acid polypeptide reads, in one-letter code: Pantothenate synthetase (289 aa).

Methionine 30–histidine 37 contributes to the ATP binding site. The Proton donor role is filled by histidine 37. Residue glutamine 61 coordinates (R)-pantoate. Glutamine 61 lines the beta-alanine pocket. An ATP-binding site is contributed by glycine 149 to aspartate 152. A (R)-pantoate-binding site is contributed by glutamine 155. Position 186-189 (methionine 186–arginine 189) interacts with ATP.

The protein belongs to the pantothenate synthetase family. In terms of assembly, homodimer.

The protein resides in the cytoplasm. The enzyme catalyses (R)-pantoate + beta-alanine + ATP = (R)-pantothenate + AMP + diphosphate + H(+). The protein operates within cofactor biosynthesis; (R)-pantothenate biosynthesis; (R)-pantothenate from (R)-pantoate and beta-alanine: step 1/1. Its function is as follows. Catalyzes the condensation of pantoate with beta-alanine in an ATP-dependent reaction via a pantoyl-adenylate intermediate. The sequence is that of Pantothenate synthetase from Psychromonas ingrahamii (strain DSM 17664 / CCUG 51855 / 37).